Consider the following 315-residue polypeptide: Acetaldehyde dehydrogenase 2 (315 aa).

15–18 (SGNI) provides a ligand contact to NAD(+). Catalysis depends on Cys135, which acts as the Acyl-thioester intermediate. NAD(+)-binding positions include 166–174 (SAGPGTRAN) and Asn293.

It belongs to the acetaldehyde dehydrogenase family.

It catalyses the reaction acetaldehyde + NAD(+) + CoA = acetyl-CoA + NADH + H(+). The polypeptide is Acetaldehyde dehydrogenase 2 (Paraburkholderia phymatum (strain DSM 17167 / CIP 108236 / LMG 21445 / STM815) (Burkholderia phymatum)).